The primary structure comprises 163 residues: Probable calcium-binding protein CML26 (163 aa).

Position 2 is an N-acetylalanine (Ala2). EF-hand domains are found at residues 16–51, 52–82, 85–120, and 121–156; these read STDMELKKVFDKFDANGDGKISVSELGNVFKSMGTS, YTEEELNRVLDEIDIDCDGFINQEEFATICR, SSAVEIREAFDLYDQNKNGLISSSEIHKVLNRLGMT, and CSVEDCVRMIGHVDTDGDGNVNFEEFQKMMSSPELV. Ca(2+)-binding residues include Asp29, Asn31, Asp33, Lys35, Glu40, Asp65, Asp67, Asp69, Glu76, Asp98, Asn100, Asn102, Glu109, Asp134, Asp136, Asp138, Asn140, and Glu145.

Functionally, potential calcium sensor. The polypeptide is Probable calcium-binding protein CML26 (CML26) (Arabidopsis thaliana (Mouse-ear cress)).